The sequence spans 196 residues: Peptidyl-tRNA hydrolase (196 aa).

Tyrosine 21 contacts tRNA. Histidine 26 functions as the Proton acceptor in the catalytic mechanism. Phenylalanine 72, asparagine 74, and asparagine 120 together coordinate tRNA.

It belongs to the PTH family. In terms of assembly, monomer.

It is found in the cytoplasm. It carries out the reaction an N-acyl-L-alpha-aminoacyl-tRNA + H2O = an N-acyl-L-amino acid + a tRNA + H(+). In terms of biological role, hydrolyzes ribosome-free peptidyl-tRNAs (with 1 or more amino acids incorporated), which drop off the ribosome during protein synthesis, or as a result of ribosome stalling. Catalyzes the release of premature peptidyl moieties from peptidyl-tRNA molecules trapped in stalled 50S ribosomal subunits, and thus maintains levels of free tRNAs and 50S ribosomes. This Mycobacteroides abscessus (strain ATCC 19977 / DSM 44196 / CCUG 20993 / CIP 104536 / JCM 13569 / NCTC 13031 / TMC 1543 / L948) (Mycobacterium abscessus) protein is Peptidyl-tRNA hydrolase.